The following is a 452-amino-acid chain: Tubulin gamma chain (452 aa).

142-148 (AGGTGSG) is a binding site for GTP.

The protein belongs to the tubulin family.

Its subcellular location is the cytoplasm. The protein localises to the cytoskeleton. The protein resides in the microtubule organizing center. It localises to the centrosome. In terms of biological role, tubulin is the major constituent of microtubules. The gamma chain is found at microtubule organizing centers (MTOC) such as the spindle poles or the centrosome, suggesting that it is involved in the minus-end nucleation of microtubule assembly. This chain is Tubulin gamma chain (G-TUB), found in Plasmodium falciparum (isolate NF54).